The primary structure comprises 245 residues: 23S rRNA (guanosine-2'-O-)-methyltransferase RlmB (245 aa).

The S-adenosyl-L-methionine site is built by glycine 197, isoleucine 217, and leucine 226.

It belongs to the class IV-like SAM-binding methyltransferase superfamily. RNA methyltransferase TrmH family. RlmB subfamily.

Its subcellular location is the cytoplasm. The catalysed reaction is guanosine(2251) in 23S rRNA + S-adenosyl-L-methionine = 2'-O-methylguanosine(2251) in 23S rRNA + S-adenosyl-L-homocysteine + H(+). Specifically methylates the ribose of guanosine 2251 in 23S rRNA. This is 23S rRNA (guanosine-2'-O-)-methyltransferase RlmB from Photobacterium profundum (strain SS9).